The chain runs to 94 residues: Co-chaperonin GroES (94 aa).

This sequence belongs to the GroES chaperonin family. As to quaternary structure, heptamer of 7 subunits arranged in a ring. Interacts with the chaperonin GroEL.

Its subcellular location is the cytoplasm. Functionally, together with the chaperonin GroEL, plays an essential role in assisting protein folding. The GroEL-GroES system forms a nano-cage that allows encapsulation of the non-native substrate proteins and provides a physical environment optimized to promote and accelerate protein folding. GroES binds to the apical surface of the GroEL ring, thereby capping the opening of the GroEL channel. This is Co-chaperonin GroES from Streptococcus agalactiae serotype III (strain NEM316).